Here is a 498-residue protein sequence, read N- to C-terminus: ATP synthase subunit beta, chloroplastic (498 aa).

172–179 (GGAGVGKT) is a binding site for ATP.

The protein belongs to the ATPase alpha/beta chains family. In terms of assembly, F-type ATPases have 2 components, CF(1) - the catalytic core - and CF(0) - the membrane proton channel. CF(1) has five subunits: alpha(3), beta(3), gamma(1), delta(1), epsilon(1). CF(0) has four main subunits: a(1), b(1), b'(1) and c(9-12).

The protein resides in the plastid. It is found in the chloroplast thylakoid membrane. The enzyme catalyses ATP + H2O + 4 H(+)(in) = ADP + phosphate + 5 H(+)(out). Functionally, produces ATP from ADP in the presence of a proton gradient across the membrane. The catalytic sites are hosted primarily by the beta subunits. The protein is ATP synthase subunit beta, chloroplastic of Licuala grandis (Ruffled fan palm).